Here is a 640-residue protein sequence, read N- to C-terminus: Zinc finger protein 549 (640 aa).

In terms of domain architecture, KRAB spans 27-140 (VTFEDIAVYF…PYTSVASGKW (114 aa)). The segment at 217-241 (FQQRRYKCEQVFNEKVHVTEHQRVH) adopts a C2H2-type 1; degenerate zinc-finger fold. A Glycyl lysine isopeptide (Lys-Gly) (interchain with G-Cter in SUMO2) cross-link involves residue K223. A C2H2-type 2; degenerate zinc finger spans residues 247-269 (YKRREYGKSLNSKYLFVEHQRTH). 13 consecutive C2H2-type zinc fingers follow at residues 275-298 (YVCN…QRIH), 304-326 (YVCI…QRTH), 332-355 (YVCN…QRIH), 361-383 (YVCM…QRVH), 389-411 (YQCS…HRIH), 417-439 (YECK…QRIH), 445-467 (YVCI…QRIH), 473-495 (YECS…HKIH), 501-523 (YECS…QRIH), 529-551 (CECN…QKVH), 557-579 (CECS…QKVH), 585-607 (YNCT…QRIH), and 613-635 (YECG…QKVH).

The protein belongs to the krueppel C2H2-type zinc-finger protein family.

It is found in the nucleus. Functionally, may be involved in transcriptional regulation. The sequence is that of Zinc finger protein 549 (ZNF549) from Homo sapiens (Human).